Reading from the N-terminus, the 877-residue chain is Phosphoenolpyruvate carboxylase (877 aa).

Residues His-137 and Lys-542 contribute to the active site.

The protein belongs to the PEPCase type 1 family. Mg(2+) is required as a cofactor.

It catalyses the reaction oxaloacetate + phosphate = phosphoenolpyruvate + hydrogencarbonate. Functionally, forms oxaloacetate, a four-carbon dicarboxylic acid source for the tricarboxylic acid cycle. The sequence is that of Phosphoenolpyruvate carboxylase from Tolumonas auensis (strain DSM 9187 / NBRC 110442 / TA 4).